The sequence spans 418 residues: Transmembrane protease serine 11A (418 aa).

Over 1–18 the chain is Cytoplasmic; the sequence is MMYRTVGFGTRSRNLKPW. The helical; Signal-anchor for type II membrane protein transmembrane segment at 19–39 threads the bilayer; sequence MIAVLIVLSLTVVAVTIGLLV. Topologically, residues 40–418 are extracellular; the sequence is HFLVFDQKKE…RNWIASKTGI (379 aa). Positions 47 to 164 constitute an SEA domain; sequence KKEYYHGSFK…SSVQVNAMSS (118 aa). The N-linked (GlcNAc...) asparagine glycan is linked to Asn153. Residues 187–417 form the Peptidase S1 domain; it reads IASGVIAPKA…YRNWIASKTG (231 aa). An intrachain disulfide couples Cys212 to Cys228. Active-site charge relay system residues include His227 and Asp272. A glycan (N-linked (GlcNAc...) asparagine) is linked at Asn303. Disulfide bonds link Cys337-Cys353 and Cys364-Cys393. Catalysis depends on Ser368, which acts as the Charge relay system.

Belongs to the peptidase S1 family. May interact with ZBTB17. Expressed in esophagus, liver, colon and lung. Down-regulated in esophagus cancers.

It is found in the membrane. Its function is as follows. Probable serine protease which may play a role in cellular senescence. Overexpression inhibits cell growth and induce G1 cell cycle arrest. The chain is Transmembrane protease serine 11A (TMPRSS11A) from Homo sapiens (Human).